A 122-amino-acid polypeptide reads, in one-letter code: Cytochrome c-556 (122 aa).

Residues Met-11, Cys-111, Cys-114, and His-115 each coordinate heme. Residues Met-11, Cys-111, Cys-114, and His-115 each contribute to the heme c site.

In terms of assembly, monomer. Binds 1 heme c group covalently per subunit.

Low-spin monoheme cytochrome c. The chain is Cytochrome c-556 from Agrobacterium tumefaciens (strain II Chrys).